The sequence spans 113 residues: Cysteine proteinase inhibitor 6 (113 aa).

The N-terminal stretch at 1–18 is a signal peptide; the sequence is MAMTTRTLLLAAVCAAAA. Residues 65 to 69 carry the Secondary area of contact motif; that stretch reads QVVSG.

It belongs to the cystatin family. Phytocystatin subfamily.

Its subcellular location is the secreted. Its function is as follows. Specific inhibitor of cysteine proteinases. Probably involved in the regulation of endogenous processes and in defense against pests and pathogens. This Oryza sativa subsp. japonica (Rice) protein is Cysteine proteinase inhibitor 6.